We begin with the raw amino-acid sequence, 553 residues long: Putative transport protein CKO_00031 (553 aa).

A run of 5 helical transmembrane segments spans residues 4–24 (IALT…IGNI), 28–48 (GVGF…HFVD), 65–85 (FGLI…FFAS), 95–115 (LFAI…HKIF), and 158–178 (MSYA…MWLM). 2 RCK C-terminal domains span residues 192–276 (QHED…VIGQ) and 279–361 (DTSL…VVGN). A run of 6 helical transmembrane segments spans residues 371–391 (MLPV…PLFV), 393–413 (GFPV…ALIL), 437–457 (LGIV…FIDT), 464–484 (LSWI…VGLL), 493–513 (YLTL…LAFA), and 533–553 (LVMF…WGLG).

This sequence belongs to the AAE transporter (TC 2.A.81) family. YidE subfamily.

It is found in the cell membrane. The protein is Putative transport protein CKO_00031 of Citrobacter koseri (strain ATCC BAA-895 / CDC 4225-83 / SGSC4696).